A 356-amino-acid polypeptide reads, in one-letter code: Glutamine synthetase cytosolic isozyme 1-4 (356 aa).

Position 2 is an N-acetylserine (Ser-2). 2 positions are modified to phosphoserine: Ser-2 and Ser-48. The region spanning 19-99 (IIAEYIWIGG…VMCDAYTPAG (81 aa)) is the GS beta-grasp domain. Positions 37 to 66 (ARTLPGPVTDPSQLPKWNYDGSSTGQAPGD) are disordered. In terms of domain architecture, GS catalytic spans 106–356 (KRHAAAKIFE…IAESTILWKP (251 aa)).

The protein belongs to the glutamine synthetase family. Homooctamer. Interacts with GRF3. Expressed in the pericycle in the region of lateral root emergence.

It localises to the cytoplasm. The catalysed reaction is L-glutamate + NH4(+) + ATP = L-glutamine + ADP + phosphate + H(+). Its function is as follows. High-affinity glutamine synthetase. May contribute to the homeostatic control of glutamine synthesis in roots. The polypeptide is Glutamine synthetase cytosolic isozyme 1-4 (Arabidopsis thaliana (Mouse-ear cress)).